A 307-amino-acid chain; its full sequence is Porphobilinogen deaminase (307 aa).

C239 is subject to S-(dipyrrolylmethanemethyl)cysteine.

This sequence belongs to the HMBS family. As to quaternary structure, monomer. It depends on dipyrromethane as a cofactor.

The enzyme catalyses 4 porphobilinogen + H2O = hydroxymethylbilane + 4 NH4(+). It participates in porphyrin-containing compound metabolism; protoporphyrin-IX biosynthesis; coproporphyrinogen-III from 5-aminolevulinate: step 2/4. Tetrapolymerization of the monopyrrole PBG into the hydroxymethylbilane pre-uroporphyrinogen in several discrete steps. This Campylobacter jejuni subsp. jejuni serotype O:2 (strain ATCC 700819 / NCTC 11168) protein is Porphobilinogen deaminase (hemC).